Reading from the N-terminus, the 38-residue chain is Mu/omega-theraphotoxin-Mb1b (38 aa).

3 disulfides stabilise this stretch: C7–C21, C14–C26, and C20–C33. Position 38 is a serine amide (S38).

It belongs to the neurotoxin 10 (Hwtx-1) family. 28 (Jztx-11) subfamily. Expressed by the venom gland.

The protein resides in the secreted. In terms of biological role, paralytic toxin on insects that inhibits voltage-gated sodium (Nav) and calcium (Cav) channels in P.americana (American cockroach) dorsal unpaired median (DUM) neurons, and also inhibits the B.germanica (German cockroach) Nav channel (BgNaV1). May act as a gating-modifier toxin on Nav and as a pore blocker on Cav. In vivo, reversibly paralyzes both L.cuprina (Australian sheep blowfly) and M.domestica (housefly), but does not affect larvae of H.armigera (cotton bollworms). The chain is Mu/omega-theraphotoxin-Mb1b from Monocentropus balfouri (Socotra Island blue baboon tarantula).